The primary structure comprises 194 residues: ATP-dependent Clp protease proteolytic subunit 3 (194 aa).

Residue serine 96 is the Nucleophile of the active site. Histidine 121 is a catalytic residue.

Belongs to the peptidase S14 family. Fourteen ClpP subunits assemble into 2 heptameric rings which stack back to back to give a disk-like structure with a central cavity, resembling the structure of eukaryotic proteasomes.

It localises to the cytoplasm. It carries out the reaction Hydrolysis of proteins to small peptides in the presence of ATP and magnesium. alpha-casein is the usual test substrate. In the absence of ATP, only oligopeptides shorter than five residues are hydrolyzed (such as succinyl-Leu-Tyr-|-NHMec, and Leu-Tyr-Leu-|-Tyr-Trp, in which cleavage of the -Tyr-|-Leu- and -Tyr-|-Trp bonds also occurs).. Cleaves peptides in various proteins in a process that requires ATP hydrolysis. Has a chymotrypsin-like activity. Plays a major role in the degradation of misfolded proteins. The chain is ATP-dependent Clp protease proteolytic subunit 3 from Rhizobium johnstonii (strain DSM 114642 / LMG 32736 / 3841) (Rhizobium leguminosarum bv. viciae).